The chain runs to 138 residues: Large ribosomal subunit protein uL16 (138 aa).

A compositionally biased stretch (basic residues) spans 1 to 15 (MLSPKKVKYRKKQRG). The disordered stretch occupies residues 1–21 (MLSPKKVKYRKKQRGRLSGEA).

The protein belongs to the universal ribosomal protein uL16 family. As to quaternary structure, part of the 50S ribosomal subunit.

Its function is as follows. Binds 23S rRNA and is also seen to make contacts with the A and possibly P site tRNAs. The chain is Large ribosomal subunit protein uL16 from Borreliella afzelii (strain PKo) (Borrelia afzelii).